Reading from the N-terminus, the 126-residue chain is Fluoride-specific ion channel FluC 2 (126 aa).

A run of 4 helical transmembrane segments spans residues 11-31, 43-63, 69-89, and 93-113; these read IFLIGAGGFLGAICRFSLCEL, VLGSFMLGLIMYDTEYIGFIG, AFGTGFMGAFTTFSTFAVQSF, and FFPALENISVNLFLALVGVFM. Positions 76 and 79 each coordinate Na(+).

The protein belongs to the fluoride channel Fluc/FEX (TC 1.A.43) family.

It localises to the cell membrane. It carries out the reaction fluoride(in) = fluoride(out). Na(+) is not transported, but it plays an essential structural role and its presence is essential for fluoride channel function. In terms of biological role, fluoride-specific ion channel. Important for reducing fluoride concentration in the cell, thus reducing its toxicity. The sequence is that of Fluoride-specific ion channel FluC 2 from Methanosarcina barkeri (strain Fusaro / DSM 804).